Consider the following 148-residue polypeptide: MTSFKLVKYIPRIKKKKSGLRKLARKVPTDRLLKFERVFKAQKRIPMSVFKAQRVLDEIRWRYYEETVMILNLMPYRASYPILKLVYSAAANATHYRDFDKANLFITKAEVSRSTIMKKFRPRARGRSFPIKKSMCHITIVLNIVKKS.

Belongs to the universal ribosomal protein uL22 family. Part of the 50S ribosomal subunit.

It localises to the plastid. The protein localises to the chloroplast. In terms of biological role, this protein binds specifically to 23S rRNA. The globular domain of the protein is located near the polypeptide exit tunnel on the outside of the subunit, while an extended beta-hairpin is found that lines the wall of the exit tunnel in the center of the 70S ribosome. The protein is Large ribosomal subunit protein uL22c (rpl22) of Triticum aestivum (Wheat).